The following is a 331-amino-acid chain: 6-phosphogluconolactonase (331 aa).

This sequence belongs to the cycloisomerase 2 family.

It carries out the reaction 6-phospho-D-glucono-1,5-lactone + H2O = 6-phospho-D-gluconate + H(+). Its pathway is carbohydrate degradation; pentose phosphate pathway; D-ribulose 5-phosphate from D-glucose 6-phosphate (oxidative stage): step 2/3. Functionally, catalyzes the hydrolysis of 6-phosphogluconolactone to 6-phosphogluconate. This Salmonella agona (strain SL483) protein is 6-phosphogluconolactonase.